The following is a 548-amino-acid chain: MFS-type transporter TOXA (548 aa).

The span at 1-12 (MDEQIVSASSNV) shows a compositional bias: polar residues. The segment at 1 to 33 (MDEQIVSASSNVKDGVEKQPVKDREDVDANVVP) is disordered. Residues 14–27 (DGVEKQPVKDREDV) show a composition bias toward basic and acidic residues. 14 helical membrane passes run 43-63 (ISLI…FLGA), 85-105 (AVAW…PLFG), 114-134 (KWLF…CALA), 146-166 (VAGI…ALIV), 177-197 (MIGA…GAIA), 204-224 (WCFW…LFFF), 250-270 (IGAG…QWGG), 280-300 (VVAL…HQYW), 316-336 (GFLL…AALY), 357-377 (MLPI…TISF), 382-402 (APFI…LYTF), 411-431 (IIGY…QAFI), 444-464 (YASA…LCVC), and 518-538 (FLVA…LSWA).

Belongs to the major facilitator superfamily. TCR/Tet family.

It is found in the membrane. In terms of biological role, MFS-type transporter; part of the diffuse TOX2 gene cluster that mediates the biosynthesis of the HC-toxin, cyclic tetrapeptide of structure cyclo(D-Pro-L-Ala-D-Ala-L-Aeo), where Aeo stands for 2-amino-9,10-epoxi-8-oxodecanoic acid. HC-toxin is a determinant of specificity and virulence in the interaction between the producing fungus and its host, maize. TOXA acts as a HC-toxin efflux pump which contributes to self-protection against HC-toxin and/or the secretion of HC-toxin into the extracellular milieu. This is MFS-type transporter TOXA from Cochliobolus carbonum (Maize leaf spot fungus).